A 320-amino-acid polypeptide reads, in one-letter code: Cytochrome f (320 aa).

An N-terminal signal peptide occupies residues 1–35 (MQTRNTFSWIREEITRSISVSLIIYIITWASISSA). 4 residues coordinate heme: Tyr36, Cys56, Cys59, and His60. The chain crosses the membrane as a helical span at residues 286–305 (VQGLLFFLGSVVLAQIFLVL).

This sequence belongs to the cytochrome f family. The 4 large subunits of the cytochrome b6-f complex are cytochrome b6, subunit IV (17 kDa polypeptide, petD), cytochrome f and the Rieske protein, while the 4 small subunits are PetG, PetL, PetM and PetN. The complex functions as a dimer. Heme is required as a cofactor.

The protein resides in the plastid. It localises to the chloroplast thylakoid membrane. Its function is as follows. Component of the cytochrome b6-f complex, which mediates electron transfer between photosystem II (PSII) and photosystem I (PSI), cyclic electron flow around PSI, and state transitions. The sequence is that of Cytochrome f (petA) from Arabidopsis thaliana (Mouse-ear cress).